The sequence spans 154 residues: Protein X (154 aa).

Positions 68–117 (PCALRFTSARCMETTVNAHQILPKVLHKRTLGLPAMSTTDLEAYFKDCVF) are mitochondrial targeting sequence.

It belongs to the orthohepadnavirus protein X family. In terms of assembly, may form homodimer. May interact with host CEBPA, CFLAR, CREB1, DDB1, E4F1, HBXIP, HSPD1/HSP60, NFKBIA, POLR2E and SMAD4. Interacts with host SMC5-SMC6 complex and induces its degradation. Interacts with host TRPC4AP; leading to prevent ubiquitination of TRPC4AP. Interacts with host PLSCR1; this interaction promotes ubiquitination and degradation of HBx and impairs HBx-mediated cell proliferation. In terms of processing, a fraction may be phosphorylated in insect cells and HepG2 cells, a human hepatoblastoma cell line. Phosphorylated in vitro by host protein kinase C or mitogen-activated protein kinase. N-acetylated in insect cells.

The protein resides in the host cytoplasm. The protein localises to the host nucleus. It is found in the host mitochondrion. Multifunctional protein that plays a role in silencing host antiviral defenses and promoting viral transcription. Does not seem to be essential for HBV infection. May be directly involved in development of cirrhosis and liver cancer (hepatocellular carcinoma). Most of cytosolic activities involve modulation of cytosolic calcium. The effect on apoptosis is controversial depending on the cell types in which the studies have been conducted. May induce apoptosis by localizing in mitochondria and causing loss of mitochondrial membrane potential. May also modulate apoptosis by binding host CFLAR, a key regulator of the death-inducing signaling complex (DISC). Promotes viral transcription by using the host E3 ubiquitin ligase DDB1 to target the SMC5-SMC6 complex to proteasomal degradation. This host complex would otherwise bind to viral episomal DNA, and prevents its transcription. Moderately stimulates transcription of many different viral and cellular transcription elements. Promoters and enhancers stimulated by HBx contain DNA binding sites for NF-kappa-B, AP-1, AP-2, c-EBP, ATF/CREB, or the calcium-activated factor NF-AT. This chain is Protein X, found in Hepatitis B virus genotype A2 subtype adw2 (strain Rutter 1979) (HBV-A).